A 476-amino-acid chain; its full sequence is 3-isopropylmalate dehydratase large subunit (476 aa).

[4Fe-4S] cluster contacts are provided by Cys-357, Cys-417, and Cys-420.

This sequence belongs to the aconitase/IPM isomerase family. LeuC type 1 subfamily. As to quaternary structure, heterodimer of LeuC and LeuD. [4Fe-4S] cluster is required as a cofactor.

The catalysed reaction is (2R,3S)-3-isopropylmalate = (2S)-2-isopropylmalate. Its pathway is amino-acid biosynthesis; L-leucine biosynthesis; L-leucine from 3-methyl-2-oxobutanoate: step 2/4. Catalyzes the isomerization between 2-isopropylmalate and 3-isopropylmalate, via the formation of 2-isopropylmaleate. In Mycolicibacterium paratuberculosis (strain ATCC BAA-968 / K-10) (Mycobacterium paratuberculosis), this protein is 3-isopropylmalate dehydratase large subunit.